Consider the following 1013-residue polypeptide: Tolloid-like protein 1 (1013 aa).

Residues 1–30 (MGLQALSPRMLLWLVVSGIVFSRVLWVCAG) form the signal peptide. Positions 31–147 (LDYDYTFDGN…EQSEKNRVPR (117 aa)) are excised as a propeptide. Residues 124–150 (QNNTMKGKAPPKLSEQSEKNRVPRAAT) form a disordered region. Residues 148–347 (AATSRTERIW…AQARKLYRCP (200 aa)) form the Peptidase M12A domain. The N-linked (GlcNAc...) asparagine glycan is linked to Asn-169. 4 disulfide bridges follow: Cys-190/Cys-346, Cys-210/Cys-232, Cys-212/Cys-213, and Cys-349/Cys-375. His-240 provides a ligand contact to Zn(2+). Glu-241 is a catalytic residue. Residues His-244 and His-250 each contribute to the Zn(2+) site. 2 consecutive CUB domains span residues 349–461 (CGET…YEAI) and 462–574 (CGGE…FFKE). 2 N-linked (GlcNAc...) asparagine glycosylation sites follow: Asn-359 and Asn-390. 15 disulfide bridges follow: Cys-402–Cys-424, Cys-462–Cys-488, Cys-515–Cys-537, Cys-578–Cys-590, Cys-586–Cys-599, Cys-601–Cys-614, Cys-618–Cys-644, Cys-671–Cys-693, Cys-734–Cys-745, Cys-741–Cys-754, Cys-756–Cys-769, Cys-774–Cys-800, Cys-827–Cys-849, Cys-887–Cys-917, and Cys-944–Cys-966. The EGF-like 1; calcium-binding domain maps to 574–615 (EEDECAKPDRGGCEQRCLNTLGSYQCACEPGYELGPDRRSCE). Residues 618-730 (CGGLLTKLNG…KGFKAHFFSD (113 aa)) form the CUB 3 domain. An N-linked (GlcNAc...) asparagine glycan is attached at Asn-626. One can recognise an EGF-like 2; calcium-binding domain in the interval 730 to 770 (DKDECSKDNGGCQHECVNTMGSYTCQCRNGFVLHENKHDCK). 2 CUB domains span residues 774 to 886 (CEQK…HSTE) and 887 to 1003 (CGGR…YKSI).

Zn(2+) serves as cofactor. In terms of tissue distribution, highly expressed in brain and kidney and weakly in lung, skeletal muscle. A perceptible level of expression is observed in heart and testis.

Its subcellular location is the secreted. Protease which processes procollagen C-propeptides, such as chordin, pro-biglycan and pro-lysyl oxidase. Required for the embryonic development, especially heart development. Predominant protease, which in the development, influences dorsal-ventral patterning and skeletogenesis. This chain is Tolloid-like protein 1 (Tll1), found in Mus musculus (Mouse).